The primary structure comprises 169 residues: Peptide deformylase (169 aa).

Fe cation-binding residues include Cys91 and His133. Glu134 is a catalytic residue. Residue His137 coordinates Fe cation.

Belongs to the polypeptide deformylase family. Requires Fe(2+) as cofactor.

The catalysed reaction is N-terminal N-formyl-L-methionyl-[peptide] + H2O = N-terminal L-methionyl-[peptide] + formate. Functionally, removes the formyl group from the N-terminal Met of newly synthesized proteins. Requires at least a dipeptide for an efficient rate of reaction. N-terminal L-methionine is a prerequisite for activity but the enzyme has broad specificity at other positions. In Salmonella agona (strain SL483), this protein is Peptide deformylase.